A 307-amino-acid polypeptide reads, in one-letter code: tRNA N(3)-methylcytidine methyltransferase trm140 (307 aa).

W83, Y87, G125, D150, D176, L177, and I197 together coordinate S-adenosyl-L-methionine.

The protein belongs to the methyltransferase superfamily. METL family.

The enzyme catalyses cytidine(32) in tRNA(Thr) + S-adenosyl-L-methionine = N(3)-methylcytidine(32) in tRNA(Thr) + S-adenosyl-L-homocysteine + H(+). Its function is as follows. S-adenosyl-L-methionine-dependent methyltransferase that mediates N(3)-methylcytidine modification of residue 32 of the tRNA anticodon loop of tRNA(Thr). Does not catalyze N(3)-methylcytidine modification of tRNA(Ser). The polypeptide is tRNA N(3)-methylcytidine methyltransferase trm140 (Schizosaccharomyces pombe (strain 972 / ATCC 24843) (Fission yeast)).